The sequence spans 165 residues: Peptide deformylase (165 aa).

2 residues coordinate Fe cation: Cys88 and His130. Glu131 is a catalytic residue. His134 lines the Fe cation pocket.

Belongs to the polypeptide deformylase family. Requires Fe(2+) as cofactor.

The enzyme catalyses N-terminal N-formyl-L-methionyl-[peptide] + H2O = N-terminal L-methionyl-[peptide] + formate. Its function is as follows. Removes the formyl group from the N-terminal Met of newly synthesized proteins. Requires at least a dipeptide for an efficient rate of reaction. N-terminal L-methionine is a prerequisite for activity but the enzyme has broad specificity at other positions. The chain is Peptide deformylase from Borreliella burgdorferi (strain ATCC 35210 / DSM 4680 / CIP 102532 / B31) (Borrelia burgdorferi).